The chain runs to 384 residues: S-adenosylmethionine synthase (384 aa).

An ATP-binding site is contributed by His-15. Asp-17 contacts Mg(2+). Glu-43 contributes to the K(+) binding site. L-methionine contacts are provided by Glu-56 and Gln-99. Residues 99-109 (QSPDINQGVDR) are flexible loop. ATP is bound by residues 164-166 (DAK), 230-231 (RF), Asp-239, 245-246 (RK), Ala-262, and Lys-266. Position 239 (Asp-239) interacts with L-methionine. Lys-270 contacts L-methionine.

It belongs to the AdoMet synthase family. Homotetramer; dimer of dimers. Mg(2+) serves as cofactor. The cofactor is K(+).

The protein localises to the cytoplasm. The catalysed reaction is L-methionine + ATP + H2O = S-adenosyl-L-methionine + phosphate + diphosphate. It participates in amino-acid biosynthesis; S-adenosyl-L-methionine biosynthesis; S-adenosyl-L-methionine from L-methionine: step 1/1. Functionally, catalyzes the formation of S-adenosylmethionine (AdoMet) from methionine and ATP. The overall synthetic reaction is composed of two sequential steps, AdoMet formation and the subsequent tripolyphosphate hydrolysis which occurs prior to release of AdoMet from the enzyme. The protein is S-adenosylmethionine synthase of Salmonella choleraesuis (strain SC-B67).